The chain runs to 817 residues: Alpha-bisabolene synthase (817 aa).

5 residues coordinate Mg(2+): D566, D570, D713, T717, and E721. A DDXXD motif motif is present at residues D566–D570.

This sequence belongs to the terpene synthase family. Tpsd subfamily. Mg(2+) is required as a cofactor. It depends on Mn(2+) as a cofactor. K(+) serves as cofactor.

The protein localises to the cytoplasm. The catalysed reaction is (2E,6E)-farnesyl diphosphate = (E,R)-alpha-bisabolene + diphosphate. Its pathway is terpene metabolism; oleoresin biosynthesis. Converts farnesyl diphosphate to alpha-bisabolene. Involved in defensive oleoresin formation in conifers in response to insect attack or other injury. Involved in sesquiterpene (C15) olefins biosynthesis. This is Alpha-bisabolene synthase (ag1) from Abies grandis (Grand fir).